Consider the following 205-residue polypeptide: DNA-directed RNA polymerase subunit 5 (205 aa).

The protein belongs to the archaeal Rpo5/eukaryotic RPB5 RNA polymerase subunit family.

The protein localises to the virion. The enzyme catalyses RNA(n) + a ribonucleoside 5'-triphosphate = RNA(n+1) + diphosphate. Its function is as follows. DNA-dependent RNA polymerase catalyzes the transcription of DNA into RNA using the four ribonucleoside triphosphates as substrates. This chain is DNA-directed RNA polymerase subunit 5, found in Acanthamoeba polyphaga (Amoeba).